Here is a 107-residue protein sequence, read N- to C-terminus: Heme-degrading monooxygenase (107 aa).

One can recognise an ABM domain in the interval Ile2 to Tyr94. Fe cation is bound at residue Asn6. His76 provides a ligand contact to heme.

It belongs to the antibiotic biosynthesis monooxygenase family. Heme-degrading monooxygenase IsdG subfamily. As to quaternary structure, homodimer.

The protein resides in the cytoplasm. It carries out the reaction heme b + 3 reduced [NADPH--hemoprotein reductase] + 3 O2 = biliverdin IXalpha + CO + Fe(2+) + 3 oxidized [NADPH--hemoprotein reductase] + 3 H2O + H(+). Its function is as follows. Allows bacterial pathogens to use the host heme as an iron source. Catalyzes the oxidative degradation of the heme macrocyclic porphyrin ring to the biliverdin in the presence of a suitable electron donor such as ascorbate or NADPH--cytochrome P450 reductase, with subsequent release of free iron. In Bacillus cereus (strain ATCC 14579 / DSM 31 / CCUG 7414 / JCM 2152 / NBRC 15305 / NCIMB 9373 / NCTC 2599 / NRRL B-3711), this protein is Heme-degrading monooxygenase.